The sequence spans 338 residues: Glycerol-3-phosphate dehydrogenase [NAD(P)+] (338 aa).

Residues Ser-13, Trp-14, and Lys-108 each coordinate NADPH. The sn-glycerol 3-phosphate site is built by Lys-108, Gly-139, and Ser-141. Residue Ala-143 participates in NADPH binding. Sn-glycerol 3-phosphate contacts are provided by Lys-194, Asp-247, Ser-257, Arg-258, and Asn-259. Catalysis depends on Lys-194, which acts as the Proton acceptor. Arg-258 lines the NADPH pocket. 2 residues coordinate NADPH: Val-282 and Glu-284.

This sequence belongs to the NAD-dependent glycerol-3-phosphate dehydrogenase family.

Its subcellular location is the cytoplasm. It catalyses the reaction sn-glycerol 3-phosphate + NAD(+) = dihydroxyacetone phosphate + NADH + H(+). It carries out the reaction sn-glycerol 3-phosphate + NADP(+) = dihydroxyacetone phosphate + NADPH + H(+). It functions in the pathway membrane lipid metabolism; glycerophospholipid metabolism. Functionally, catalyzes the reduction of the glycolytic intermediate dihydroxyacetone phosphate (DHAP) to sn-glycerol 3-phosphate (G3P), the key precursor for phospholipid synthesis. The chain is Glycerol-3-phosphate dehydrogenase [NAD(P)+] from Streptococcus pneumoniae (strain CGSP14).